The following is a 185-amino-acid chain: Ribosome-recycling factor (185 aa).

Belongs to the RRF family.

It localises to the cytoplasm. In terms of biological role, responsible for the release of ribosomes from messenger RNA at the termination of protein biosynthesis. May increase the efficiency of translation by recycling ribosomes from one round of translation to another. The protein is Ribosome-recycling factor of Helicobacter pylori (strain Shi470).